A 413-amino-acid chain; its full sequence is Protein SLX4IP (413 aa).

Glycyl lysine isopeptide (Lys-Gly) (interchain with G-Cter in SUMO2) cross-links involve residues K61, K79, K167, K176, and K236. 2 disordered regions span residues 172 to 193 and 228 to 300; these read RTKSKGTDVSKPQPSGDLVGRS and SHQE…GSVE. Positions 238-254 are enriched in polar residues; sequence ENVSQTQPGDTRSQQQL. Glycyl lysine isopeptide (Lys-Gly) (interchain with G-Cter in SUMO2) cross-links involve residues K288, K344, and K353. A disordered region spans residues 363–413; that stretch reads SSRHLVTNNPGQAQQSDSAAITEQLATDQGGPSKKRKKLQSYNRGCSGKKN. Residues 364 to 389 show a composition bias toward polar residues; the sequence is SRHLVTNNPGQAQQSDSAAITEQLAT. T389 is subject to Phosphothreonine. K396 participates in a covalent cross-link: Glycyl lysine isopeptide (Lys-Gly) (interchain with G-Cter in SUMO2).

This sequence belongs to the SLX4IP family. In terms of assembly, interacts with SLX4/BTBD12; subunit of different structure-specific endonucleases.

This Mus musculus (Mouse) protein is Protein SLX4IP (Slx4ip).